The sequence spans 184 residues: Large ribosomal subunit protein uL22A (184 aa).

A Glycyl lysine isopeptide (Lys-Gly) (interchain with G-Cter in ubiquitin) cross-link involves residue K46. The residue at position 70 (T70) is a Phosphothreonine.

This sequence belongs to the universal ribosomal protein uL22 family. As to quaternary structure, component of the large ribosomal subunit (LSU). Mature yeast ribosomes consist of a small (40S) and a large (60S) subunit. The 40S small subunit contains 1 molecule of ribosomal RNA (18S rRNA) and 33 different proteins (encoded by 57 genes). The large 60S subunit contains 3 rRNA molecules (25S, 5.8S and 5S rRNA) and 46 different proteins (encoded by 81 genes). uL22 is associated with the polypeptide exit tunnel.

The protein localises to the cytoplasm. Its function is as follows. Component of the ribosome, a large ribonucleoprotein complex responsible for the synthesis of proteins in the cell. The small ribosomal subunit (SSU) binds messenger RNAs (mRNAs) and translates the encoded message by selecting cognate aminoacyl-transfer RNA (tRNA) molecules. The large subunit (LSU) contains the ribosomal catalytic site termed the peptidyl transferase center (PTC), which catalyzes the formation of peptide bonds, thereby polymerizing the amino acids delivered by tRNAs into a polypeptide chain. The nascent polypeptides leave the ribosome through a tunnel in the LSU and interact with protein factors that function in enzymatic processing, targeting, and the membrane insertion of nascent chains at the exit of the ribosomal tunnel. This is Large ribosomal subunit protein uL22A from Saccharomyces cerevisiae (strain ATCC 204508 / S288c) (Baker's yeast).